Reading from the N-terminus, the 278-residue chain is NAD-capped RNA hydrolase NudC (278 aa).

Position 84 (R84) interacts with substrate. The Zn(2+) site is built by C114 and C117. Substrate is bound at residue E127. Zn(2+) is bound by residues C132 and C135. A substrate-binding site is contributed by Y140. The 125-residue stretch at 141–265 folds into the Nudix hydrolase domain; it reads PRLSPSMIVL…IARHLIDLYL (125 aa). Positions 174, 190, and 194 each coordinate a divalent metal cation. Residues 175-196 carry the Nudix box motif; that stretch reads GFVEAGESVEQCVVREVREEVG. 208–215 contacts substrate; sequence QNWPFPHS. E235 contributes to the a divalent metal cation binding site. A257 is a substrate binding site.

The protein belongs to the Nudix hydrolase family. NudC subfamily. As to quaternary structure, homodimer. The cofactor is Mg(2+). It depends on Mn(2+) as a cofactor. Requires Zn(2+) as cofactor.

It carries out the reaction a 5'-end NAD(+)-phospho-ribonucleoside in mRNA + H2O = a 5'-end phospho-adenosine-phospho-ribonucleoside in mRNA + beta-nicotinamide D-ribonucleotide + 2 H(+). The catalysed reaction is NAD(+) + H2O = beta-nicotinamide D-ribonucleotide + AMP + 2 H(+). The enzyme catalyses NADH + H2O = reduced beta-nicotinamide D-ribonucleotide + AMP + 2 H(+). Its function is as follows. mRNA decapping enzyme that specifically removes the nicotinamide adenine dinucleotide (NAD) cap from a subset of mRNAs by hydrolyzing the diphosphate linkage to produce nicotinamide mononucleotide (NMN) and 5' monophosphate mRNA. The NAD-cap is present at the 5'-end of some mRNAs and stabilizes RNA against 5'-processing. Has preference for mRNAs with a 5'-end purine. Catalyzes the hydrolysis of a broad range of dinucleotide pyrophosphates. The sequence is that of NAD-capped RNA hydrolase NudC from Pseudomonas aeruginosa (strain LESB58).